We begin with the raw amino-acid sequence, 304 residues long: UDP-N-acetylenolpyruvoylglucosamine reductase (304 aa).

The 166-residue stretch at 28–193 folds into the FAD-binding PCMH-type domain; that stretch reads KTGGPADYLA…LTATFALTPG (166 aa). Residue arginine 172 is part of the active site. Serine 222 acts as the Proton donor in catalysis. The active site involves glutamate 292.

The protein belongs to the MurB family. Requires FAD as cofactor.

It is found in the cytoplasm. The enzyme catalyses UDP-N-acetyl-alpha-D-muramate + NADP(+) = UDP-N-acetyl-3-O-(1-carboxyvinyl)-alpha-D-glucosamine + NADPH + H(+). The protein operates within cell wall biogenesis; peptidoglycan biosynthesis. Its function is as follows. Cell wall formation. This is UDP-N-acetylenolpyruvoylglucosamine reductase from Levilactobacillus brevis (strain ATCC 367 / BCRC 12310 / CIP 105137 / JCM 1170 / LMG 11437 / NCIMB 947 / NCTC 947) (Lactobacillus brevis).